We begin with the raw amino-acid sequence, 185 residues long: uncharacterized protein (185 aa).

This is an uncharacterized protein from Acanthamoeba polyphaga (Amoeba).